The following is a 741-amino-acid chain: NUT family member 2G (741 aa).

5 disordered regions span residues 172–200 (PGNA…PDDS), 293–375 (IQKS…PEEI), 391–424 (LGSH…SDPG), 496–624 (RAAP…LPGM), and 638–741 (RLSQ…HCSQ). Over residues 304 to 321 (SLPPPAPPRLEPRGPPAP) the composition is skewed to pro residues. Basic and acidic residues predominate over residues 402–412 (EGQREKGKVEQ). The span at 528-545 (QRVSVETSPPQTAAQDPQ) shows a compositional bias: polar residues. Residues 639–650 (LSQSPVPSSGLL) show a composition bias toward low complexity. A compositionally biased stretch (basic residues) spans 731-741 (SRRKKKRHCSQ).

This sequence belongs to the NUT family.

The chain is NUT family member 2G (NUTM2G) from Homo sapiens (Human).